A 130-amino-acid polypeptide reads, in one-letter code: Small ribosomal subunit protein uS8 (130 aa).

This sequence belongs to the universal ribosomal protein uS8 family. As to quaternary structure, part of the 30S ribosomal subunit. Contacts proteins S5 and S12.

In terms of biological role, one of the primary rRNA binding proteins, it binds directly to 16S rRNA central domain where it helps coordinate assembly of the platform of the 30S subunit. This Pseudomonas entomophila (strain L48) protein is Small ribosomal subunit protein uS8.